The following is a 147-amino-acid chain: Hemoglobin subunit gamma (147 aa).

One can recognise a Globin domain in the interval 3–147 (DFTAEEKAAI…VASAVARKYH (145 aa)). 2 residues coordinate heme b: H64 and H93.

It belongs to the globin family. Heterotetramer of two alpha chains and two gamma chains in fetal hemoglobin (Hb F). In terms of tissue distribution, red blood cells.

Gamma chains make up the fetal hemoglobin F, in combination with alpha chains. The chain is Hemoglobin subunit gamma (HBG) from Trichechus manatus (Caribbean manatee).